We begin with the raw amino-acid sequence, 178 residues long: Deoxycytidylate deaminase (178 aa).

Residues 14-145 (EWPEYFMAVA…EETTAARLLF (132 aa)) enclose the CMP/dCMP-type deaminase domain. His-84 contacts Zn(2+). The active-site Proton donor is Glu-86. Residues Cys-110 and Cys-113 each coordinate Zn(2+). Ser-174 is modified (phosphoserine).

It belongs to the cytidine and deoxycytidylate deaminase family. In terms of assembly, homohexamer. It depends on Zn(2+) as a cofactor.

It catalyses the reaction dCMP + H2O + H(+) = dUMP + NH4(+). The enzyme catalyses 5-hydroxymethyl-dCMP + H2O + H(+) = 5-hydroxymethyl-dUMP + NH4(+). Its activity is regulated as follows. Allosteric enzyme whose activity is greatly influenced by the end products of its metabolic pathway, dCTP and dTTP. Its function is as follows. Catalyzes the deamination of dCMP to dUMP, providing the nucleoside monophosphate substrate for the thymidylate synthase/TYMS. Also, part of a nucleotide salvage pathway that eliminates epigenetically modified 5-hydroxymethyl-dCMP (hmdCMP) in a two-step process entailing deamination to cytotoxic 5-hydroxymethyl-dUMP (hmdUMP), followed by its hydrolysis into 5-hydroxymethyluracil (hmU) and 2-deoxy-D-ribose 5-phosphate (deoxyribosephosphate). Catalyzes the first step in that pathway, the deamination of 5-hydroxymethyl-dCMP (hmdCMP). The protein is Deoxycytidylate deaminase of Mus musculus (Mouse).